The primary structure comprises 541 residues: MNPSTAQATAVVDELVRGGVREVVLCPGSRNAPLAFALQAADLEGRLRLHMRIDERTAGFLALGLAVAGKRPVPIVMTSGTAVANLGPAVLEANYARVPLVVLSANRPYEMLGTGANQTIEQLGLFGSQVRATISLGLAEDDAGQNSQWRSAVCRVLAAARGTRSGNAGPVHFDIPLREPLVPDVHAQGPVPQGRPGGAAWTTTQHATLDVPMDLDLTPDTIVISGHGSALRPELAGLPTVAEPTAPLHGIPVHPMALPQLKPRQAVITGRPTLHRSVSKVLADPSVAVYALTTGPRWPDVSGNVLATGTRAVVSGEPDRAWINRCRTLSEHTDKAVRAQLAAHPKATGLHVAAAVMDALTDGDQLLLGASNPVRDAALVSYPAPKIRVLSNRGVAGIDGTVSAAVGAALAYEEGRTVALLGDLTFLHDASGLLIGSGEPRPRDLTIVVANDDGGGIFELLEQGDPQYAGVFERVFGTPHGMDLAALCAAYRVEHHLVGLGELSTRLSAPEAPGDRGIRVLEVTTERSGLRELHAAVRAQL.

It belongs to the TPP enzyme family. MenD subfamily. Homodimer. Mg(2+) serves as cofactor. The cofactor is Mn(2+). It depends on thiamine diphosphate as a cofactor.

It catalyses the reaction isochorismate + 2-oxoglutarate + H(+) = 5-enolpyruvoyl-6-hydroxy-2-succinyl-cyclohex-3-ene-1-carboxylate + CO2. Its pathway is quinol/quinone metabolism; 1,4-dihydroxy-2-naphthoate biosynthesis; 1,4-dihydroxy-2-naphthoate from chorismate: step 2/7. The protein operates within quinol/quinone metabolism; menaquinone biosynthesis. Functionally, catalyzes the thiamine diphosphate-dependent decarboxylation of 2-oxoglutarate and the subsequent addition of the resulting succinic semialdehyde-thiamine pyrophosphate anion to isochorismate to yield 2-succinyl-5-enolpyruvyl-6-hydroxy-3-cyclohexene-1-carboxylate (SEPHCHC). The polypeptide is 2-succinyl-5-enolpyruvyl-6-hydroxy-3-cyclohexene-1-carboxylate synthase (Rhodococcus jostii (strain RHA1)).